The chain runs to 222 residues: Cytidylate kinase (222 aa).

12-20 is a binding site for ATP; that stretch reads GPSGAGKGT.

It belongs to the cytidylate kinase family. Type 1 subfamily.

It localises to the cytoplasm. It catalyses the reaction CMP + ATP = CDP + ADP. It carries out the reaction dCMP + ATP = dCDP + ADP. This Methylococcus capsulatus (strain ATCC 33009 / NCIMB 11132 / Bath) protein is Cytidylate kinase.